Here is a 453-residue protein sequence, read N- to C-terminus: Bifunctional protein GlmU (453 aa).

A pyrophosphorylase region spans residues M1–K225. UDP-N-acetyl-alpha-D-glucosamine-binding positions include L6–G9, K20, Q71, G76–T77, Y98–D100, G135, E150, N165, and N223. D100 is a Mg(2+) binding site. N223 is a binding site for Mg(2+). Residues A226 to D246 form a linker region. The interval G247 to S453 is N-acetyltransferase. UDP-N-acetyl-alpha-D-glucosamine is bound by residues R329 and K347. Catalysis depends on H359, which acts as the Proton acceptor. UDP-N-acetyl-alpha-D-glucosamine-binding residues include Y362 and N373. Acetyl-CoA-binding positions include A376, N382–Y383, S401, and A419.

This sequence in the N-terminal section; belongs to the N-acetylglucosamine-1-phosphate uridyltransferase family. The protein in the C-terminal section; belongs to the transferase hexapeptide repeat family. Homotrimer. Mg(2+) is required as a cofactor.

The protein localises to the cytoplasm. It carries out the reaction alpha-D-glucosamine 1-phosphate + acetyl-CoA = N-acetyl-alpha-D-glucosamine 1-phosphate + CoA + H(+). It catalyses the reaction N-acetyl-alpha-D-glucosamine 1-phosphate + UTP + H(+) = UDP-N-acetyl-alpha-D-glucosamine + diphosphate. It participates in nucleotide-sugar biosynthesis; UDP-N-acetyl-alpha-D-glucosamine biosynthesis; N-acetyl-alpha-D-glucosamine 1-phosphate from alpha-D-glucosamine 6-phosphate (route II): step 2/2. Its pathway is nucleotide-sugar biosynthesis; UDP-N-acetyl-alpha-D-glucosamine biosynthesis; UDP-N-acetyl-alpha-D-glucosamine from N-acetyl-alpha-D-glucosamine 1-phosphate: step 1/1. The protein operates within bacterial outer membrane biogenesis; LPS lipid A biosynthesis. In terms of biological role, catalyzes the last two sequential reactions in the de novo biosynthetic pathway for UDP-N-acetylglucosamine (UDP-GlcNAc). The C-terminal domain catalyzes the transfer of acetyl group from acetyl coenzyme A to glucosamine-1-phosphate (GlcN-1-P) to produce N-acetylglucosamine-1-phosphate (GlcNAc-1-P), which is converted into UDP-GlcNAc by the transfer of uridine 5-monophosphate (from uridine 5-triphosphate), a reaction catalyzed by the N-terminal domain. The protein is Bifunctional protein GlmU of Burkholderia orbicola (strain AU 1054).